A 476-amino-acid polypeptide reads, in one-letter code: MNLLDPFMKMSEEQDKCLSGAPSPTMSEDSAGSPCPSGSGSDTENTRPQENTFPKGDQEMKKETEDEKFPVCIREAVSQVLKGYDWTLVPMPVRVNGSSKNKPHVKRPMNAFMVWAQAARRKLADQYPHLHNAELSKTLGKLWRLLNEGEKRPFVEEAERLRVQHKKDHPDYKYQPRRRKSVKNGQSEQDDSAEQTHISPNAIFKALQADSPHSTSSMSEVHSPGEHSGQSQGPPTPPTTPKTDVQPGKPDLKREGRPLQESGRQPPHIDFRDVDIGELSSEVISTIETFDVNEFDQYLPPNGHPGVGSAQAPYTGSYGISSTPSATTGAGSAWMSKQQQQPQQHSLSTINSEQSQSQQRTHIKTEQLSPSHYSDQQQQHSPQQLNYSSFNLQHYSSSYPTITRAQYDYTEHQGSNSYYTHASGQNSGLYSNFTYMNPSQRPMYTPIADTTGVPSIPQTHSPQHWEQPVYTQLTRP.

Disordered regions lie at residues 1–67 (MNLL…TEDE), 157–197 (EAER…EQTH), and 209–274 (ADSP…FRDV). The span at 30–41 (SAGSPCPSGSGS) shows a compositional bias: low complexity. Residues 42 to 52 (DTENTRPQENT) show a composition bias toward polar residues. Composition is skewed to basic and acidic residues over residues 56 to 67 (GDQEMKKETEDE) and 157 to 174 (EAER…DYKY). Lysine 61 is covalently cross-linked (Glycyl lysine isopeptide (Lys-Gly) (interchain with G-Cter in SUMO)). The HMG box DNA-binding region spans 105–173 (VKRPMNAFMV…QHKKDHPDYK (69 aa)). The segment covering 211–220 (SPHSTSSMSE) has biased composition (polar residues). Short sequence motifs (9aaTAD) lie at residues 276 to 285 (IGELSSEVIS) and 291 to 299 (DVNEFDQYL). Residues 318 to 383 (YGISSTPSAT…SDQQQQHSPQ (66 aa)) form a disordered region. Low complexity predominate over residues 319–344 (GISSTPSATTGAGSAWMSKQQQQPQQ). Positions 345-360 (HSLSTINSEQSQSQQR) are enriched in polar residues. Lysine 364 participates in a covalent cross-link: Glycyl lysine isopeptide (Lys-Gly) (interchain with G-Cter in SUMO). Positions 369–383 (SPSHYSDQQQQHSPQ) are enriched in low complexity. The 9aaTAD 3 motif lies at 427-435 (SGLYSNFTY). The disordered stretch occupies residues 443-476 (MYTPIADTTGVPSIPQTHSPQHWEQPVYTQLTRP). Polar residues predominate over residues 452–476 (GVPSIPQTHSPQHWEQPVYTQLTRP).

As to quaternary structure, interacts with the sumoylation factors ube2i/ubc9 and sumo1. Sumoylated. Lys-364 is the major site of sumoylation, although sumoylation at Lys-61 also occurs. Sumoylation plays a key role in regulating formation of the neural crest and otic placode.

Its subcellular location is the nucleus. It localises to the cytoplasm. Transcription factor that plays a key role in chondrocytes differentiation and skeletal development. Specifically binds the 5'-ACAAAG-3' DNA motif present in enhancers and super-enhancers and promotes expression of genes important for chondrogenesis, including COL2A1. Plays a central role in successive steps of chondrocyte differentiation. Absolutely required for precartilaginous condensation, the first step in chondrogenesis during which skeletal progenitors differentiate into prechondrocytes. Together with SOX5 and SOX6, required for overt chondrogenesis when condensed prechondrocytes differentiate into early stage chondrocytes, the second step in chondrogenesis. Later, required to direct hypertrophic maturation and block osteoblast differentiation of growth plate chondrocytes: maintains chondrocyte columnar proliferation, delays prehypertrophy and then prevents osteoblastic differentiation of chondrocytes. Also required for chondrocyte hypertrophy, both indirectly, by keeping the lineage fate of chondrocytes, and directly, by remaining present in upper hypertrophic cells. Low lipid levels are the main nutritional determinant for chondrogenic commitment of skeletal progenitor cells: when lipids levels are low, FOXO transcription factors promote expression of SOX9, which induces chondrogenic commitment and suppresses fatty acid oxidation. In addition to cartilage development, also acts as a regulator of proliferation and differentiation in epithelial stem/progenitor cells. The chain is Transcription factor Sox-9-B (sox9-b) from Xenopus laevis (African clawed frog).